The chain runs to 98 residues: NADH-ubiquinone oxidoreductase chain 4L (98 aa).

3 helical membrane-spanning segments follow: residues 1 to 21 (MALIYTNTLLAFTISLLGLLL), 29 to 49 (SLLCLEGMMLSMFVMVAVMIL), and 61 to 81 (IVLLVFAACEAALGLSLLVMV).

Belongs to the complex I subunit 4L family. As to quaternary structure, core subunit of respiratory chain NADH dehydrogenase (Complex I) which is composed of 45 different subunits.

The protein localises to the mitochondrion inner membrane. The catalysed reaction is a ubiquinone + NADH + 5 H(+)(in) = a ubiquinol + NAD(+) + 4 H(+)(out). Functionally, core subunit of the mitochondrial membrane respiratory chain NADH dehydrogenase (Complex I) which catalyzes electron transfer from NADH through the respiratory chain, using ubiquinone as an electron acceptor. Part of the enzyme membrane arm which is embedded in the lipid bilayer and involved in proton translocation. In Rhinolophus monoceros (Formosan lesser horseshoe bat), this protein is NADH-ubiquinone oxidoreductase chain 4L (MT-ND4L).